Reading from the N-terminus, the 1028-residue chain is MMFPWKQLILLSFIGCLGGELLLQGPVFIKEPSNSIFPVGSEDKKITLHCEARGNPSPHYRWQLNGSDIDMSMEHRYKLNGGNLVVINPNRNWDTGTYQCFATNSLGTIVSREAKLQFAYLENFKTKMRSTVSVREGQGVVLLCGPPPHSGELSYAWIFNEYPSFVEEDSRRFVSQETGHLYISKVEPSDVGNYTCVVTSMVTNARVLGSPTPLVLRSDGVMGEYEPKIEVQFPETLPAAKGSTVKLECFALGNPIPQINWRRSDGLPFSSKIKLRKFSGVLEIPNFQQEDAGSYECIAENSRGKNVARGRLTYYAKPHWVQLIKDVEIAVEDSLYWECRASGKPKPSYRWLKNGAALVLEERTQIENGALTISNLSVTDSGMFQCIAENKHGLVYSSAELKVVASAPDFSKNPMKKLVQVQVGSLVSLDCKPRASPRALSSWKKGDVSVQEHERISLLNDGGLKIANVTKADAGTYTCMAENQFGKANGTTHLVVTEPTRITLAPSNMDVSVGESVILPCQVQHDPLLDIIFTWYFNGALADFKKDGSHFEKVGGSSSGDLMIRNIQLKHSGKYVCMVQTGVDSVSSAADLIVRGSPGPPENVKVDEITDTTAQLSWKEGKDNHSPVISYSIQARTPFSVGWQTVTTVPEVIDGKTHTATVVELNPWVEYEFRVVASNKIGGGEPSLPSEKVRTEEAVPEVPPSEVNGGGGSRSELVITWDPVPEELQNGEGFGYVVAFRPLGVTTWIQTVVTSPDTPRYVFRNESIVPYSPYEVKVGVYNNKGEGPFSPVTTVFSAEEEPTVAPSQVSANSLSSSEIEVSWNTIPWKLSNGHLLGYEVRYWNGGGKEESSSKMKVAGNETSARLRGLKSNLAYYTAVRAYNSAGAGPFSATVNVTTKKTPPSQPPGNVVWNATDTKVLLNWEQVKAMENESEVTGYKVFYRTSSQNNVQVLNTNKTSAELVLPIKEDYIIEVKATTDGGDGTSSEQIRIPRITSMDARGSTSAISNVHPMSSYMPIVLFLIVYVLW.

Positions 1–19 (MMFPWKQLILLSFIGCLGG) are cleaved as a signal peptide. Ig-like C2-type domains lie at 26-117 (PVFI…AKLQ), 122-208 (ENFK…ARVL), 227-313 (PKIE…GRLT), 318-402 (PHWV…AELK), 408-497 (PDFS…LVVT), and 499-593 (PTRI…ADLI). 5 cysteine pairs are disulfide-bonded: cysteine 50/cysteine 100, cysteine 144/cysteine 196, cysteine 249/cysteine 297, cysteine 339/cysteine 386, and cysteine 431/cysteine 479. Residues asparagine 65 and asparagine 193 are each glycosylated (N-linked (GlcNAc...) asparagine). 3 N-linked (GlcNAc...) asparagine glycosylation sites follow: asparagine 375, asparagine 468, and asparagine 489. A disulfide bridge connects residues cysteine 521 and cysteine 577. Fibronectin type-III domains lie at 600 to 698 (PPEN…TEEA), 703 to 800 (PPSE…SAEE), 805 to 901 (APSQ…TKKT), and 902 to 998 (PPSQ…TSMD). The segment at 684–713 (GEPSLPSEKVRTEEAVPEVPPSEVNGGGGS) is disordered. Asparagine 765, asparagine 860, asparagine 895, asparagine 913, asparagine 931, and asparagine 956 each carry an N-linked (GlcNAc...) asparagine glycan. Residue serine 1002 is the site of GPI-anchor amidated serine attachment. The propeptide at 1003–1028 (TSAISNVHPMSSYMPIVLFLIVYVLW) is removed in mature form.

It belongs to the immunoglobulin superfamily. Contactin family. As to quaternary structure, interacts with PTPRG. In brain, it is expressed in frontal lobe, occipital lobe, cerebellum and amygdala.

The protein resides in the cell membrane. Functionally, contactins mediate cell surface interactions during nervous system development. Has some neurite outgrowth-promoting activity. The polypeptide is Contactin-3 (CNTN3) (Homo sapiens (Human)).